The chain runs to 113 residues: Putative pterin-4-alpha-carbinolamine dehydratase (113 aa).

Belongs to the pterin-4-alpha-carbinolamine dehydratase family.

The enzyme catalyses (4aS,6R)-4a-hydroxy-L-erythro-5,6,7,8-tetrahydrobiopterin = (6R)-L-erythro-6,7-dihydrobiopterin + H2O. In Nitrosospira multiformis (strain ATCC 25196 / NCIMB 11849 / C 71), this protein is Putative pterin-4-alpha-carbinolamine dehydratase.